A 352-amino-acid polypeptide reads, in one-letter code: Phosphoribosylformylglycinamidine cyclo-ligase (352 aa).

It belongs to the AIR synthase family.

The protein localises to the cytoplasm. It catalyses the reaction 2-formamido-N(1)-(5-O-phospho-beta-D-ribosyl)acetamidine + ATP = 5-amino-1-(5-phospho-beta-D-ribosyl)imidazole + ADP + phosphate + H(+). It participates in purine metabolism; IMP biosynthesis via de novo pathway; 5-amino-1-(5-phospho-D-ribosyl)imidazole from N(2)-formyl-N(1)-(5-phospho-D-ribosyl)glycinamide: step 2/2. The protein is Phosphoribosylformylglycinamidine cyclo-ligase of Coxiella burnetii (strain RSA 331 / Henzerling II).